The following is a 95-amino-acid chain: Small ribosomal subunit protein uS19 (95 aa).

The disordered stretch occupies residues 73 to 95; sequence EFSPTRSYRGHGADKNAKGSKKK.

This sequence belongs to the universal ribosomal protein uS19 family.

Its function is as follows. Protein S19 forms a complex with S13 that binds strongly to the 16S ribosomal RNA. This chain is Small ribosomal subunit protein uS19, found in Deinococcus deserti (strain DSM 17065 / CIP 109153 / LMG 22923 / VCD115).